Reading from the N-terminus, the 309-residue chain is Glutaminase (309 aa).

Residues Ser-64, Asn-114, Glu-160, Asn-167, Tyr-191, Tyr-243, and Val-261 each coordinate substrate.

This sequence belongs to the glutaminase family. In terms of assembly, homotetramer.

The catalysed reaction is L-glutamine + H2O = L-glutamate + NH4(+). This Methylorubrum extorquens (strain CM4 / NCIMB 13688) (Methylobacterium extorquens) protein is Glutaminase.